Here is a 445-residue protein sequence, read N- to C-terminus: MREIVHIQAGQCGNQIGAKFWEVISDEHGIDPTGSYHGDSDLQLERINVYYNEATGNKYVPRAILVDLEPGTMDSVRSGPFGQIFRPDNFVFGQSGAGNNWAKGHYTEGAELVDSVLDVVRKESESCDCLQGFQLTHSLGGGTGSGMGTLLISKIREEYPDRIMNTFSVMPSPKVSDTVVEPYNATLSVHQLVENTDETYCIDNEALYDICFRTLKLTTPTYGDLNHLVSATMSGVTTCLRFPGQLNADLRKLAVNMVPFPRLHFFMPGFAPLTSRGSQQYRALTVPELTQQMFDSKNMMAACDPRHGRYLTVAAIFRGRMSMKEVDEQMLNVQNKNSSYFVEWIPNNVKTAVCDIPPRGLKMSATFIGNSTAIQELFKRISEQFTAMFRRKAFLHWYTGEGMDEMEFTEAESNMNDLVSEYQQYQDATADEQGEFEEEGEEDEA.

The MREI motif motif lies at 1-4 (MREI). Residues Gln-11, Glu-69, Ser-138, Gly-142, Thr-143, Gly-144, Asn-204, and Asn-226 each contribute to the GTP site. Residue Glu-69 participates in Mg(2+) binding. Positions 424–445 (QYQDATADEQGEFEEEGEEDEA) are disordered. The segment covering 429–445 (TADEQGEFEEEGEEDEA) has biased composition (acidic residues). Glu-438 is subject to 5-glutamyl polyglutamate.

It belongs to the tubulin family. As to quaternary structure, dimer of alpha and beta chains. A typical microtubule is a hollow water-filled tube with an outer diameter of 25 nm and an inner diameter of 15 nM. Alpha-beta heterodimers associate head-to-tail to form protofilaments running lengthwise along the microtubule wall with the beta-tubulin subunit facing the microtubule plus end conferring a structural polarity. Microtubules usually have 13 protofilaments but different protofilament numbers can be found in some organisms and specialized cells. Mg(2+) is required as a cofactor. In terms of processing, some glutamate residues at the C-terminus are polyglycylated, resulting in polyglycine chains on the gamma-carboxyl group. Glycylation is mainly limited to tubulin incorporated into axonemes (cilia and flagella) whereas glutamylation is prevalent in neuronal cells, centrioles, axonemes, and the mitotic spindle. Both modifications can coexist on the same protein on adjacent residues, and lowering polyglycylation levels increases polyglutamylation, and reciprocally. The precise function of polyglycylation is still unclear. Some glutamate residues at the C-terminus are polyglutamylated, resulting in polyglutamate chains on the gamma-carboxyl group. Polyglutamylation plays a key role in microtubule severing by spastin (SPAST). SPAST preferentially recognizes and acts on microtubules decorated with short polyglutamate tails: severing activity by SPAST increases as the number of glutamates per tubulin rises from one to eight, but decreases beyond this glutamylation threshold. In terms of tissue distribution, highly expressed in neuronal cells.

The protein resides in the cytoplasm. Its subcellular location is the cytoskeleton. In terms of biological role, tubulin is the major constituent of microtubules, a cylinder consisting of laterally associated linear protofilaments composed of alpha- and beta-tubulin heterodimers. Microtubules grow by the addition of GTP-tubulin dimers to the microtubule end, where a stabilizing cap forms. Below the cap, tubulin dimers are in GDP-bound state, owing to GTPase activity of alpha-tubulin. In Gallus gallus (Chicken), this protein is Tubulin beta-2 chain.